Reading from the N-terminus, the 740-residue chain is Elongation factor 2 (740 aa).

Residues 23 to 264 enclose the tr-type G domain; that stretch reads AQIRNAGTLA…MIIEHIPPPN (242 aa). GTP is bound by residues 32–39, 98–102, and 152–155; these read AHVDHGKT, DTPGH, and NKID. At His605 the chain carries Diphthamide.

The protein belongs to the TRAFAC class translation factor GTPase superfamily. Classic translation factor GTPase family. EF-G/EF-2 subfamily.

Its subcellular location is the cytoplasm. Functionally, catalyzes the GTP-dependent ribosomal translocation step during translation elongation. During this step, the ribosome changes from the pre-translocational (PRE) to the post-translocational (POST) state as the newly formed A-site-bound peptidyl-tRNA and P-site-bound deacylated tRNA move to the P and E sites, respectively. Catalyzes the coordinated movement of the two tRNA molecules, the mRNA and conformational changes in the ribosome. This Pyrobaculum aerophilum (strain ATCC 51768 / DSM 7523 / JCM 9630 / CIP 104966 / NBRC 100827 / IM2) protein is Elongation factor 2.